The primary structure comprises 522 residues: Glycerol kinase (522 aa).

Substrate is bound at residue Thr-15. Arg-19 is an ATP binding site. Residues 89–90, Tyr-143, and 255–256 contribute to the substrate site; these read RE and DQ. Residues Thr-276, Gly-321, and 430-434 contribute to the ATP site; that span reads GATAN.

Belongs to the FGGY kinase family. In terms of tissue distribution, highly expressed in germinating seeds and senescent leaves, and at lower levels in roots, leaves, flowers and siliques.

It is found in the cytoplasm. It localises to the cytosol. The catalysed reaction is glycerol + ATP = sn-glycerol 3-phosphate + ADP + H(+). The protein operates within polyol metabolism; glycerol degradation via glycerol kinase pathway; sn-glycerol 3-phosphate from glycerol: step 1/1. In terms of biological role, key enzyme in the regulation of glycerol uptake and metabolism. Required for resistance to nonhost Pseudomonas bacteria and to the pathogenic fungus B.cinerea. The sequence is that of Glycerol kinase (GLPK) from Arabidopsis thaliana (Mouse-ear cress).